The sequence spans 282 residues: Phosphoglycerate mutase-like protein 1 (282 aa).

Residue histidine 23 is the Tele-phosphohistidine intermediate of the active site. Glutamate 135 acts as the Proton donor/acceptor in catalysis.

The protein belongs to the phosphoglycerate mutase family.

Functionally, may play a role in carbohydrates metabolism. The sequence is that of Phosphoglycerate mutase-like protein 1 from Arabidopsis thaliana (Mouse-ear cress).